The chain runs to 140 residues: Histone H2B (140 aa).

Over residues 1 to 10 (MPPKAAEKKP) the composition is skewed to basic and acidic residues. The disordered stretch occupies residues 1–48 (MPPKAAEKKPTTGGKAPAGKAPAEKKEAGKKTAAAASGDKKKRGKTRK). Residues Lys8 and Lys9 each carry the N6-acetyllysine; alternate modification. Glycyl lysine isopeptide (Lys-Gly) (interchain with G-Cter in SUMO); alternate cross-links involve residues Lys8 and Lys9. A compositionally biased stretch (low complexity) spans 11–21 (TTGGKAPAGKA). At Lys15 the chain carries N6-acetyllysine. Lys25 bears the N6-acetyllysine; alternate mark. A Glycyl lysine isopeptide (Lys-Gly) (interchain with G-Cter in SUMO); alternate cross-link involves residue Lys25. Lys26 is covalently cross-linked (Glycyl lysine isopeptide (Lys-Gly) (interchain with G-Cter in SUMO)). A Glycyl lysine isopeptide (Lys-Gly) (interchain with G-Cter in ubiquitin) cross-link involves residue Lys134.

It belongs to the histone H2B family. In terms of assembly, the nucleosome is a histone octamer containing two molecules each of H2A, H2B, H3 and H4 assembled in one H3-H4 heterotetramer and two H2A-H2B heterodimers. The octamer wraps approximately 147 bp of DNA. Monoubiquitinated by the ubc2-bre1 complex to form H2BK123ub1. H2BK123ub1 gives a specific tag for epigenetic transcriptional activation and is also prerequisite for H3K4me and H3K79me formation. H2BK123ub1 also modulates the formation of double-strand breaks during meiosis and is a prerequisite for DNA-damage checkpoint activation. In terms of processing, acetylated by gcn5 to form H2BK11ac and H2BK16ac. H2BK16ac can also be formed by esa1. Acetylation of N-terminal lysines and particularly formation of H2BK11acK16ac has a positive effect on transcription. Post-translationally, sumoylation to form H2BK6su or H2BK7su, and probably also H2BK16su or H2BK17su, occurs preferentially near the telomeres and represses gene transcription.

Its subcellular location is the nucleus. The protein resides in the chromosome. In terms of biological role, core component of nucleosome. Nucleosomes wrap and compact DNA into chromatin, limiting DNA accessibility to the cellular machineries which require DNA as a template. Histones thereby play a central role in transcription regulation, DNA repair, DNA replication and chromosomal stability. DNA accessibility is regulated via a complex set of post-translational modifications of histones, also called histone code, and nucleosome remodeling. This is Histone H2B (htb1) from Aspergillus terreus (strain NIH 2624 / FGSC A1156).